Reading from the N-terminus, the 412-residue chain is uncharacterized protein (412 aa).

In terms of domain architecture, TRAM spans 6–64 (ELAKGDIISVEVLRPAHGGEGIGHHDGRVIFVKGGIPGDVVDVEIAQLKKKWARGEVVK). Positions 242, 278, 300, and 341 each coordinate S-adenosyl-L-methionine. The active-site Nucleophile is the C368.

This sequence belongs to the class I-like SAM-binding methyltransferase superfamily. RNA M5U methyltransferase family.

This is an uncharacterized protein from Corynebacterium glutamicum (strain ATCC 13032 / DSM 20300 / JCM 1318 / BCRC 11384 / CCUG 27702 / LMG 3730 / NBRC 12168 / NCIMB 10025 / NRRL B-2784 / 534).